Here is a 155-residue protein sequence, read N- to C-terminus: Small ribosomal subunit protein uS7 (155 aa).

The protein belongs to the universal ribosomal protein uS7 family. As to quaternary structure, part of the 30S ribosomal subunit. Contacts proteins S9 and S11.

Functionally, one of the primary rRNA binding proteins, it binds directly to 16S rRNA where it nucleates assembly of the head domain of the 30S subunit. Is located at the subunit interface close to the decoding center, probably blocks exit of the E-site tRNA. The protein is Small ribosomal subunit protein uS7 of Cytophaga hutchinsonii (strain ATCC 33406 / DSM 1761 / CIP 103989 / NBRC 15051 / NCIMB 9469 / D465).